A 334-amino-acid chain; its full sequence is GTP 3',8-cyclase (334 aa).

Positions 13 to 239 (RFHRKFYYLR…KVKAANDGPA (227 aa)) constitute a Radical SAM core domain. Arg22 contributes to the GTP binding site. Residues Cys29 and Cys33 each coordinate [4Fe-4S] cluster. Tyr35 serves as a coordination point for S-adenosyl-L-methionine. Cys36 is a [4Fe-4S] cluster binding site. Position 73 (Arg73) interacts with GTP. Gly77 provides a ligand contact to S-adenosyl-L-methionine. Thr104 is a binding site for GTP. Residue Ser128 participates in S-adenosyl-L-methionine binding. Lys165 contributes to the GTP binding site. Residue Met199 participates in S-adenosyl-L-methionine binding. [4Fe-4S] cluster contacts are provided by Cys262 and Cys265. 267–269 (RLR) contacts GTP. Position 279 (Cys279) interacts with [4Fe-4S] cluster.

The protein belongs to the radical SAM superfamily. MoaA family. Monomer and homodimer. [4Fe-4S] cluster serves as cofactor.

It catalyses the reaction GTP + AH2 + S-adenosyl-L-methionine = (8S)-3',8-cyclo-7,8-dihydroguanosine 5'-triphosphate + 5'-deoxyadenosine + L-methionine + A + H(+). The protein operates within cofactor biosynthesis; molybdopterin biosynthesis. Functionally, catalyzes the cyclization of GTP to (8S)-3',8-cyclo-7,8-dihydroguanosine 5'-triphosphate. The chain is GTP 3',8-cyclase from Vibrio vulnificus (strain CMCP6).